The primary structure comprises 259 residues: 3-methyl-2-oxobutanoate hydroxymethyltransferase (259 aa).

Mg(2+) contacts are provided by Asp-44 and Asp-83. Residues 44–45 (DS), Asp-83, and Lys-113 each bind 3-methyl-2-oxobutanoate. Glu-115 is a Mg(2+) binding site. Glu-183 (proton acceptor) is an active-site residue.

It belongs to the PanB family. In terms of assembly, homodecamer; pentamer of dimers. Requires Mg(2+) as cofactor.

It is found in the cytoplasm. It carries out the reaction 3-methyl-2-oxobutanoate + (6R)-5,10-methylene-5,6,7,8-tetrahydrofolate + H2O = 2-dehydropantoate + (6S)-5,6,7,8-tetrahydrofolate. Its pathway is cofactor biosynthesis; (R)-pantothenate biosynthesis; (R)-pantoate from 3-methyl-2-oxobutanoate: step 1/2. Functionally, catalyzes the reversible reaction in which hydroxymethyl group from 5,10-methylenetetrahydrofolate is transferred onto alpha-ketoisovalerate to form ketopantoate. The chain is 3-methyl-2-oxobutanoate hydroxymethyltransferase from Acaryochloris marina (strain MBIC 11017).